Here is a 350-residue protein sequence, read N- to C-terminus: Nicotinate-nucleotide--dimethylbenzimidazole phosphoribosyltransferase (350 aa).

Glutamate 317 acts as the Proton acceptor in catalysis.

This sequence belongs to the CobT family.

It catalyses the reaction 5,6-dimethylbenzimidazole + nicotinate beta-D-ribonucleotide = alpha-ribazole 5'-phosphate + nicotinate + H(+). It functions in the pathway nucleoside biosynthesis; alpha-ribazole biosynthesis; alpha-ribazole from 5,6-dimethylbenzimidazole: step 1/2. Functionally, catalyzes the synthesis of alpha-ribazole-5'-phosphate from nicotinate mononucleotide (NAMN) and 5,6-dimethylbenzimidazole (DMB). In Shewanella sp. (strain W3-18-1), this protein is Nicotinate-nucleotide--dimethylbenzimidazole phosphoribosyltransferase.